The primary structure comprises 644 residues: Exoribonuclease 2 (644 aa).

An RNB domain is found at R189 to K516. The S1 motif domain occupies G561–V643.

This sequence belongs to the RNR ribonuclease family. RNase II subfamily.

Its subcellular location is the cytoplasm. It carries out the reaction Exonucleolytic cleavage in the 3'- to 5'-direction to yield nucleoside 5'-phosphates.. Functionally, involved in mRNA degradation. Hydrolyzes single-stranded polyribonucleotides processively in the 3' to 5' direction. The chain is Exoribonuclease 2 from Shigella flexneri serotype 5b (strain 8401).